The primary structure comprises 453 residues: Serine/threonine-protein phosphatase 2A regulatory subunit B'' subunit gamma (453 aa).

The segment at 1 to 27 (MDWKDVLRRRLASPNSDPKRKKSEQEL) is disordered. 2 EF-hand domains span residues 273 to 308 (PSAL…TMTN) and 341 to 376 (KEPA…IQEL). Residues Asp-286, Asp-288, Asn-290, Met-292, and Glu-297 each coordinate Ca(2+).

As to quaternary structure, interacts with MCM3AP/GANP, PPP5C, and the phosphatase 2A core enzyme composed of the PPP2CA catalytic subunit and the constant regulatory subunit PPP2R1A. Finds in a complex with ABCB1, TFPI2 and PPP2R3C; leading to the dephosphorylation of ABCB1.

It localises to the nucleus. Its subcellular location is the cytoplasm. Its function is as follows. May regulate MCM3AP phosphorylation through phosphatase recruitment. May act as a negative regulator of ABCB1 expression and function through the dephosphorylation of ABCB1 by TFPI2/PPP2R3C complex. May play a role in the activation-induced cell death of B-cells. In Rattus norvegicus (Rat), this protein is Serine/threonine-protein phosphatase 2A regulatory subunit B'' subunit gamma (Ppp2r3c).